Here is a 504-residue protein sequence, read N- to C-terminus: Glutamate--tRNA ligase (504 aa).

The 'HIGH' region signature appears at 14–24 (PSPTGYLHVGG). The 'KMSKS' region signature appears at 261–265 (KLSKR). Lys-264 contacts ATP.

It belongs to the class-I aminoacyl-tRNA synthetase family. Glutamate--tRNA ligase type 1 subfamily. As to quaternary structure, monomer.

The protein resides in the cytoplasm. It carries out the reaction tRNA(Glu) + L-glutamate + ATP = L-glutamyl-tRNA(Glu) + AMP + diphosphate. Functionally, catalyzes the attachment of glutamate to tRNA(Glu) in a two-step reaction: glutamate is first activated by ATP to form Glu-AMP and then transferred to the acceptor end of tRNA(Glu). In Chlorobium luteolum (strain DSM 273 / BCRC 81028 / 2530) (Pelodictyon luteolum), this protein is Glutamate--tRNA ligase.